The chain runs to 883 residues: HTH-type transcriptional regulator AlkS (883 aa).

One can recognise an HTH luxR-type domain in the interval 816–881 (ENKAGDFLTL…QAIIEAERQG (66 aa)). A DNA-binding region (H-T-H motif) is located at residues 840–859 (NKQIATKMYVTEDAIKWHMR).

It functions in the pathway hydrocarbon metabolism; alkane degradation. In terms of biological role, may act as a transcriptional regulator of AlkB. In Pseudomonas putida (Arthrobacter siderocapsulatus), this protein is HTH-type transcriptional regulator AlkS (alkS).